The chain runs to 158 residues: MNETIVCVVGNVATRPVYRELASGASARFRLAVTSRYWDREKSEWKDGHTNFFTVWANRALATNVGASLSVGDPVVVQGRLKVRTEAREGQNWTSADIDALAVGHDLSRGTSAFRRPSAKDGEAGVSPAARPEPNWETEPGSQPSVEHQPQPEPAGVT.

The SSB domain maps to 1–107 (MNETIVCVVG…IDALAVGHDL (107 aa)). The segment at 109-158 (RGTSAFRRPSAKDGEAGVSPAARPEPNWETEPGSQPSVEHQPQPEPAGVT) is disordered.

As to quaternary structure, homotetramer.

This chain is Single-stranded DNA-binding protein 2 (ssb2), found in Streptomyces avermitilis (strain ATCC 31267 / DSM 46492 / JCM 5070 / NBRC 14893 / NCIMB 12804 / NRRL 8165 / MA-4680).